Here is a 368-residue protein sequence, read N- to C-terminus: Endoglucanase (368 aa).

Residues 1–21 (MNVLRSGIVTMLLLAAFSVQA) form the signal peptide. The active-site Proton donor is E55. The active-site Nucleophile is D116.

The protein belongs to the glycosyl hydrolase 8 (cellulase D) family.

Its subcellular location is the secreted. It carries out the reaction Endohydrolysis of (1-&gt;4)-beta-D-glucosidic linkages in cellulose, lichenin and cereal beta-D-glucans.. Its pathway is glycan metabolism; bacterial cellulose biosynthesis. Hydrolyzes carboxymethylcellulose. In Escherichia coli (strain K12), this protein is Endoglucanase (bcsZ).